A 111-amino-acid polypeptide reads, in one-letter code: Antirepressor protein CarS (111 aa).

Monomer. Interacts with CarA and CarH.

In terms of biological role, involved in carotenoid biosynthesis. Antagonizes the transcriptional repressor proteins CarA and CarH by preventing their binding to DNA. Can also dissociate preformed CarA-DNA complexes. Does not bind DNA. This chain is Antirepressor protein CarS (carS), found in Myxococcus xanthus.